A 250-amino-acid polypeptide reads, in one-letter code: Probable transcriptional regulatory protein ckrop_1032 (250 aa).

Positions 1 to 22 (MSGHSKWATTKHKKAANDAKRG) are disordered.

This sequence belongs to the TACO1 family.

The protein localises to the cytoplasm. The polypeptide is Probable transcriptional regulatory protein ckrop_1032 (Corynebacterium kroppenstedtii (strain DSM 44385 / JCM 11950 / CIP 105744 / CCUG 35717)).